The following is a 213-amino-acid chain: Octanoyltransferase (213 aa).

The 176-residue stretch at 32-207 (ENSHDEIWLV…NILALLNNPP (176 aa)) folds into the BPL/LPL catalytic domain. Residues 71-78 (RGGQVTYH), 138-140 (SLG), and 151-153 (GLA) contribute to the substrate site. C169 serves as the catalytic Acyl-thioester intermediate.

It belongs to the LipB family.

The protein resides in the cytoplasm. The enzyme catalyses octanoyl-[ACP] + L-lysyl-[protein] = N(6)-octanoyl-L-lysyl-[protein] + holo-[ACP] + H(+). It functions in the pathway protein modification; protein lipoylation via endogenous pathway; protein N(6)-(lipoyl)lysine from octanoyl-[acyl-carrier-protein]: step 1/2. Its function is as follows. Catalyzes the transfer of endogenously produced octanoic acid from octanoyl-acyl-carrier-protein onto the lipoyl domains of lipoate-dependent enzymes. Lipoyl-ACP can also act as a substrate although octanoyl-ACP is likely to be the physiological substrate. This chain is Octanoyltransferase, found in Salmonella typhi.